The primary structure comprises 175 residues: Transcription factor HES-3 (175 aa).

The bHLH domain maps to 1-49 (MEKKRRARINLSLEQLRSLLERHYSHQIRKRKLEKADILELSVKYVRSL). Residues 65-98 (YPSGFRGGLPGSSQRLRPGEDDSGLRCPLLLQRR) enclose the Orange domain. The segment covering 124–145 (PGPPAGGSQSPQSPFPPLGGLL) has biased composition (low complexity). The disordered stretch occupies residues 124 to 175 (PGPPAGGSQSPQSPFPPLGGLLESSTGILAPPPASNCQAENPRPGFRVWRPW). The short motif at 172-175 (WRPW) is the WRPW motif element.

Transcription repression requires formation of a complex with a corepressor protein of the Groucho/TLE family. Expressed exclusively in Purkinje cells.

The protein localises to the nucleus. Functionally, transcriptional repressor of genes that require a bHLH protein for their transcription. This is Transcription factor HES-3 (Hes3) from Rattus norvegicus (Rat).